We begin with the raw amino-acid sequence, 237 residues long: Ribosomal RNA small subunit methyltransferase G (237 aa).

Residues glycine 78, phenylalanine 83, 129-130 (AE), and arginine 148 contribute to the S-adenosyl-L-methionine site.

It belongs to the methyltransferase superfamily. RNA methyltransferase RsmG family.

The protein resides in the cytoplasm. Specifically methylates the N7 position of a guanine in 16S rRNA. This is Ribosomal RNA small subunit methyltransferase G from Streptococcus pyogenes serotype M49 (strain NZ131).